A 369-amino-acid polypeptide reads, in one-letter code: MATPLPLVFSAPKRGMPPAHFADLSDEQRIEALSELGLPKFRLNQIARHYYGRLEADPMTMTDLPEAARAKVKDALFPTLMEPIRVVEADDENTQKTLWKLHDGTLLESVLMRYPDRATLCISSQAGCGMACPFCATGQGGLDRNLSVGEIVDQVRNAAATMQAEGGRLSNIVFMGMGEPLANYKRVVSAVRQITQPSPEGFGISQRSVTVSTVGLAPAIRKLADEDMSVTLAVSLHTPDDELRDELVPVNNRWSVAEVLDAARYYADKSGRRVSIEYALIRDVNDQGWRADMLGQKLHKALGSRVHVNLIPLNPTPGSKWDASPRERQDEFVRRVIAQGVPCTVRDTKGQEIAAACGQLAAEENSEEK.

Residue Glu-108 is the Proton acceptor of the active site. The Radical SAM core domain occupies 114–352 (YPDRATLCIS…CTVRDTKGQE (239 aa)). A disulfide bridge links Cys-121 with Cys-357. [4Fe-4S] cluster-binding residues include Cys-128, Cys-132, and Cys-135. S-adenosyl-L-methionine contacts are provided by residues 178–179 (GE), Ser-212, 235–237 (SLH), and Asn-314. The active-site S-methylcysteine intermediate is Cys-357.

The protein belongs to the radical SAM superfamily. RlmN family. Requires [4Fe-4S] cluster as cofactor.

The protein localises to the cytoplasm. It carries out the reaction adenosine(2503) in 23S rRNA + 2 reduced [2Fe-2S]-[ferredoxin] + 2 S-adenosyl-L-methionine = 2-methyladenosine(2503) in 23S rRNA + 5'-deoxyadenosine + L-methionine + 2 oxidized [2Fe-2S]-[ferredoxin] + S-adenosyl-L-homocysteine. The enzyme catalyses adenosine(37) in tRNA + 2 reduced [2Fe-2S]-[ferredoxin] + 2 S-adenosyl-L-methionine = 2-methyladenosine(37) in tRNA + 5'-deoxyadenosine + L-methionine + 2 oxidized [2Fe-2S]-[ferredoxin] + S-adenosyl-L-homocysteine. Its function is as follows. Specifically methylates position 2 of adenine 2503 in 23S rRNA and position 2 of adenine 37 in tRNAs. The protein is Probable dual-specificity RNA methyltransferase RlmN of Corynebacterium efficiens (strain DSM 44549 / YS-314 / AJ 12310 / JCM 11189 / NBRC 100395).